The primary structure comprises 311 residues: Methionyl-tRNA formyltransferase (311 aa).

112-115 lines the (6S)-5,6,7,8-tetrahydrofolate pocket; sequence SLLP.

It belongs to the Fmt family.

It catalyses the reaction L-methionyl-tRNA(fMet) + (6R)-10-formyltetrahydrofolate = N-formyl-L-methionyl-tRNA(fMet) + (6S)-5,6,7,8-tetrahydrofolate + H(+). In terms of biological role, attaches a formyl group to the free amino group of methionyl-tRNA(fMet). The formyl group appears to play a dual role in the initiator identity of N-formylmethionyl-tRNA by promoting its recognition by IF2 and preventing the misappropriation of this tRNA by the elongation apparatus. In Sinorhizobium medicae (strain WSM419) (Ensifer medicae), this protein is Methionyl-tRNA formyltransferase.